The primary structure comprises 432 residues: Phosphomethylpyrimidine synthase (432 aa).

Substrate is bound by residues Asn66, Met95, Tyr124, His163, 185–187 (SRG), 226–229 (DGLR), and Glu265. Residue His269 participates in Zn(2+) binding. Tyr292 serves as a coordination point for substrate. His333 lines the Zn(2+) pocket. The [4Fe-4S] cluster site is built by Cys409, Cys412, and Cys416.

Belongs to the ThiC family. The cofactor is [4Fe-4S] cluster.

The catalysed reaction is 5-amino-1-(5-phospho-beta-D-ribosyl)imidazole + S-adenosyl-L-methionine = 4-amino-2-methyl-5-(phosphooxymethyl)pyrimidine + CO + 5'-deoxyadenosine + formate + L-methionine + 3 H(+). It functions in the pathway cofactor biosynthesis; thiamine diphosphate biosynthesis. Catalyzes the synthesis of the hydroxymethylpyrimidine phosphate (HMP-P) moiety of thiamine from aminoimidazole ribotide (AIR) in a radical S-adenosyl-L-methionine (SAM)-dependent reaction. This chain is Phosphomethylpyrimidine synthase, found in Desulforamulus reducens (strain ATCC BAA-1160 / DSM 100696 / MI-1) (Desulfotomaculum reducens).